Here is a 125-residue protein sequence, read N- to C-terminus: Small ribosomal subunit protein uS12 (125 aa).

Aspartate 89 is subject to 3-methylthioaspartic acid.

The protein belongs to the universal ribosomal protein uS12 family. In terms of assembly, part of the 30S ribosomal subunit. Contacts proteins S8 and S17. May interact with IF1 in the 30S initiation complex.

Its function is as follows. With S4 and S5 plays an important role in translational accuracy. In terms of biological role, interacts with and stabilizes bases of the 16S rRNA that are involved in tRNA selection in the A site and with the mRNA backbone. Located at the interface of the 30S and 50S subunits, it traverses the body of the 30S subunit contacting proteins on the other side and probably holding the rRNA structure together. The combined cluster of proteins S8, S12 and S17 appears to hold together the shoulder and platform of the 30S subunit. The protein is Small ribosomal subunit protein uS12 of Acidovorax sp. (strain JS42).